The primary structure comprises 306 residues: tRNA dimethylallyltransferase (306 aa).

Residue 14–21 (GPTAAGKS) coordinates ATP. A substrate-binding site is contributed by 16 to 21 (TAAGKS). The tract at residues 39–42 (DSRL) is interaction with substrate tRNA.

It belongs to the IPP transferase family. As to quaternary structure, monomer. Requires Mg(2+) as cofactor.

The enzyme catalyses adenosine(37) in tRNA + dimethylallyl diphosphate = N(6)-dimethylallyladenosine(37) in tRNA + diphosphate. Functionally, catalyzes the transfer of a dimethylallyl group onto the adenine at position 37 in tRNAs that read codons beginning with uridine, leading to the formation of N6-(dimethylallyl)adenosine (i(6)A). This chain is tRNA dimethylallyltransferase, found in Synechococcus elongatus (strain ATCC 33912 / PCC 7942 / FACHB-805) (Anacystis nidulans R2).